We begin with the raw amino-acid sequence, 332 residues long: Ribosomal RNA small subunit methyltransferase C (332 aa).

It belongs to the methyltransferase superfamily. RsmC family. In terms of assembly, monomer.

It localises to the cytoplasm. The catalysed reaction is guanosine(1207) in 16S rRNA + S-adenosyl-L-methionine = N(2)-methylguanosine(1207) in 16S rRNA + S-adenosyl-L-homocysteine + H(+). Specifically methylates the guanine in position 1207 of 16S rRNA in the 30S particle. The protein is Ribosomal RNA small subunit methyltransferase C of Pseudomonas aeruginosa (strain UCBPP-PA14).